Reading from the N-terminus, the 96-residue chain is U-scoloptoxin(06)-Sm1a (96 aa).

Residues 1-23 form the signal peptide; the sequence is MNSFSFFLVIFVVLNLQVAKLMA.

It belongs to the scoloptoxin-06 family. Contains 2 disulfide bonds. Expressed by the venom gland.

It is found in the secreted. The polypeptide is U-scoloptoxin(06)-Sm1a (Scolopendra morsitans (Tanzanian blue ringleg centipede)).